The primary structure comprises 456 residues: Probable glycine dehydrogenase (decarboxylating) subunit 1 (456 aa).

Belongs to the GcvP family. N-terminal subunit subfamily. As to quaternary structure, the glycine cleavage system is composed of four proteins: P, T, L and H. In this organism, the P 'protein' is a heterodimer of two subunits.

It catalyses the reaction N(6)-[(R)-lipoyl]-L-lysyl-[glycine-cleavage complex H protein] + glycine + H(+) = N(6)-[(R)-S(8)-aminomethyldihydrolipoyl]-L-lysyl-[glycine-cleavage complex H protein] + CO2. Its function is as follows. The glycine cleavage system catalyzes the degradation of glycine. The P protein binds the alpha-amino group of glycine through its pyridoxal phosphate cofactor; CO(2) is released and the remaining methylamine moiety is then transferred to the lipoamide cofactor of the H protein. This is Probable glycine dehydrogenase (decarboxylating) subunit 1 from Rhizorhabdus wittichii (strain DSM 6014 / CCUG 31198 / JCM 15750 / NBRC 105917 / EY 4224 / RW1) (Sphingomonas wittichii).